Here is a 269-residue protein sequence, read N- to C-terminus: Formamidopyrimidine-DNA glycosylase (269 aa).

The active-site Schiff-base intermediate with DNA is P2. E3 serves as the catalytic Proton donor. The active-site Proton donor; for beta-elimination activity is K57. DNA is bound by residues H90, R109, and K150. Residues 235–269 (QVYGRKGEPCRVCGTPIVATKHAQRATFYCRQCQK) form an FPG-type zinc finger. Residue R259 is the Proton donor; for delta-elimination activity of the active site.

This sequence belongs to the FPG family. Monomer. Requires Zn(2+) as cofactor.

It catalyses the reaction Hydrolysis of DNA containing ring-opened 7-methylguanine residues, releasing 2,6-diamino-4-hydroxy-5-(N-methyl)formamidopyrimidine.. It carries out the reaction 2'-deoxyribonucleotide-(2'-deoxyribose 5'-phosphate)-2'-deoxyribonucleotide-DNA = a 3'-end 2'-deoxyribonucleotide-(2,3-dehydro-2,3-deoxyribose 5'-phosphate)-DNA + a 5'-end 5'-phospho-2'-deoxyribonucleoside-DNA + H(+). In terms of biological role, involved in base excision repair of DNA damaged by oxidation or by mutagenic agents. Acts as a DNA glycosylase that recognizes and removes damaged bases. Has a preference for oxidized purines, such as 7,8-dihydro-8-oxoguanine (8-oxoG). Has AP (apurinic/apyrimidinic) lyase activity and introduces nicks in the DNA strand. Cleaves the DNA backbone by beta-delta elimination to generate a single-strand break at the site of the removed base with both 3'- and 5'-phosphates. This is Formamidopyrimidine-DNA glycosylase from Shigella dysenteriae serotype 1 (strain Sd197).